Reading from the N-terminus, the 606-residue chain is NADH-ubiquinone oxidoreductase chain 5 (606 aa).

The next 16 helical transmembrane spans lie at 4–24 (FSSL…AINF), 43–63 (AFIT…EMII), 84–104 (FFSM…MEFS), 114–134 (INQF…LVTA), 140–160 (LFIG…WWYG), 171–191 (AILY…WFLI), 213–233 (LMGL…HPWL), 241–261 (TPVS…FLLI), 272–292 (FGQS…AMCA), 301–320 (IIAF…IGIN), 325–347 (AFLH…GSII), 366–386 (MPFT…MPFL), 413–433 (LVAT…ALLG), 457–477 (LLIG…PMTI), 485–505 (YLKM…LEIS), and 582–602 (GLIK…TTLL).

Belongs to the complex I subunit 5 family. In terms of assembly, core subunit of respiratory chain NADH dehydrogenase (Complex I) which is composed of 45 different subunits.

Its subcellular location is the mitochondrion inner membrane. The enzyme catalyses a ubiquinone + NADH + 5 H(+)(in) = a ubiquinol + NAD(+) + 4 H(+)(out). Functionally, core subunit of the mitochondrial membrane respiratory chain NADH dehydrogenase (Complex I) which catalyzes electron transfer from NADH through the respiratory chain, using ubiquinone as an electron acceptor. Essential for the catalytic activity and assembly of complex I. In Ovis aries (Sheep), this protein is NADH-ubiquinone oxidoreductase chain 5 (MT-ND5).